The primary structure comprises 172 residues: Adenine phosphoribosyltransferase (172 aa).

This sequence belongs to the purine/pyrimidine phosphoribosyltransferase family. Homodimer.

The protein resides in the cytoplasm. The catalysed reaction is AMP + diphosphate = 5-phospho-alpha-D-ribose 1-diphosphate + adenine. Its pathway is purine metabolism; AMP biosynthesis via salvage pathway; AMP from adenine: step 1/1. Its function is as follows. Catalyzes a salvage reaction resulting in the formation of AMP, that is energically less costly than de novo synthesis. The polypeptide is Adenine phosphoribosyltransferase (Ligilactobacillus salivarius (strain UCC118) (Lactobacillus salivarius)).